The following is a 525-amino-acid chain: Delta(24)-sterol reductase homolog dhcr-24 (525 aa).

2 consecutive transmembrane segments (helical) span residues 27 to 47 and 214 to 234; these read WVFV…VFDF and SLFF…AATI. Residues 47 to 239 form the FAD-binding PCMH-type domain; that stretch reads FRNRIVHAVN…VAATIKIIPC (193 aa).

Belongs to the FAD-binding oxidoreductase/transferase type 4 family. FAD serves as cofactor.

The protein resides in the endoplasmic reticulum membrane. It is found in the golgi apparatus membrane. The catalysed reaction is cholesterol + NADP(+) = desmosterol + NADPH + H(+). The enzyme catalyses lanosterol + NADPH + H(+) = 24,25-dihydrolanosterol + NADP(+). It carries out the reaction 5alpha-cholest-8-en-3beta-ol + NADP(+) = zymosterol + NADPH + H(+). It functions in the pathway steroid biosynthesis; cholesterol biosynthesis. In terms of biological role, catalyzes the reduction of the delta-24 double bond of sterol intermediates during cholesterol biosynthesis. The protein is Delta(24)-sterol reductase homolog dhcr-24 of Caenorhabditis elegans.